The following is a 537-amino-acid chain: Glutamate--tRNA ligase (537 aa).

The 'HIGH' region motif lies at 9 to 19 (PSPTGLQHIGG). Positions 125, 127, 152, and 154 each coordinate Zn(2+). Residues 270-274 (KLSKR) carry the 'KMSKS' region motif. Position 273 (Lys-273) interacts with ATP.

Belongs to the class-I aminoacyl-tRNA synthetase family. Glutamate--tRNA ligase type 1 subfamily. Monomer. It depends on Zn(2+) as a cofactor.

It is found in the cytoplasm. It carries out the reaction tRNA(Glu) + L-glutamate + ATP = L-glutamyl-tRNA(Glu) + AMP + diphosphate. Its function is as follows. Catalyzes the attachment of glutamate to tRNA(Glu) in a two-step reaction: glutamate is first activated by ATP to form Glu-AMP and then transferred to the acceptor end of tRNA(Glu). The chain is Glutamate--tRNA ligase from Treponema pallidum (strain Nichols).